A 753-amino-acid chain; its full sequence is 5-methyltetrahydropteroyltriglutamate--homocysteine methyltransferase (753 aa).

5-methyltetrahydropteroyltri-L-glutamate is bound by residues 17–20 and Lys-117; that span reads RELK. L-homocysteine is bound by residues 431–433 and Glu-484; that span reads IGS. L-methionine is bound by residues 431 to 433 and Glu-484; that span reads IGS. 5-methyltetrahydropteroyltri-L-glutamate contacts are provided by residues 515–516 and Trp-561; that span reads RC. Asp-599 provides a ligand contact to L-homocysteine. Position 599 (Asp-599) interacts with L-methionine. 5-methyltetrahydropteroyltri-L-glutamate is bound at residue Glu-605. The Zn(2+) site is built by His-641, Cys-643, and Glu-665. His-694 serves as the catalytic Proton donor. Cys-726 lines the Zn(2+) pocket.

It belongs to the vitamin-B12 independent methionine synthase family. Zn(2+) serves as cofactor.

The enzyme catalyses 5-methyltetrahydropteroyltri-L-glutamate + L-homocysteine = tetrahydropteroyltri-L-glutamate + L-methionine. It participates in amino-acid biosynthesis; L-methionine biosynthesis via de novo pathway; L-methionine from L-homocysteine (MetE route): step 1/1. Catalyzes the transfer of a methyl group from 5-methyltetrahydrofolate to homocysteine resulting in methionine formation. The chain is 5-methyltetrahydropteroyltriglutamate--homocysteine methyltransferase from Escherichia coli (strain SMS-3-5 / SECEC).